The chain runs to 213 residues: HTH-type transcriptional regulator SrpR (213 aa).

Positions Glu10–Leu70 constitute an HTH tetR-type domain. A DNA-binding region (H-T-H motif) is located at residues Thr33–Phe52.

In conjunction with SrpS represses the srpABC operon. In Pseudomonas putida (Arthrobacter siderocapsulatus), this protein is HTH-type transcriptional regulator SrpR (srpR).